We begin with the raw amino-acid sequence, 155 residues long: Methylated-DNA--protein-cysteine methyltransferase (155 aa).

The active-site Nucleophile; methyl group acceptor is the C119.

This sequence belongs to the MGMT family.

The protein localises to the cytoplasm. The catalysed reaction is a 6-O-methyl-2'-deoxyguanosine in DNA + L-cysteinyl-[protein] = S-methyl-L-cysteinyl-[protein] + a 2'-deoxyguanosine in DNA. It carries out the reaction a 4-O-methyl-thymidine in DNA + L-cysteinyl-[protein] = a thymidine in DNA + S-methyl-L-cysteinyl-[protein]. In terms of biological role, involved in the cellular defense against the biological effects of O6-methylguanine (O6-MeG) and O4-methylthymine (O4-MeT) in DNA. Repairs the methylated nucleobase in DNA by stoichiometrically transferring the methyl group to a cysteine residue in the enzyme. This is a suicide reaction: the enzyme is irreversibly inactivated. The chain is Methylated-DNA--protein-cysteine methyltransferase from Sulfolobus acidocaldarius (strain ATCC 33909 / DSM 639 / JCM 8929 / NBRC 15157 / NCIMB 11770).